The sequence spans 293 residues: Pantothenate synthetase (293 aa).

30–37 (MGYLHKGH) is a binding site for ATP. Residue H37 is the Proton donor of the active site. Q61 is a (R)-pantoate binding site. Q61 provides a ligand contact to beta-alanine. 147–150 (GEKD) is an ATP binding site. (R)-pantoate is bound at residue Q153. Residues V176 and 184–187 (CSSR) each bind ATP.

It belongs to the pantothenate synthetase family. In terms of assembly, homodimer.

Its subcellular location is the cytoplasm. It carries out the reaction (R)-pantoate + beta-alanine + ATP = (R)-pantothenate + AMP + diphosphate + H(+). Its pathway is cofactor biosynthesis; (R)-pantothenate biosynthesis; (R)-pantothenate from (R)-pantoate and beta-alanine: step 1/1. Catalyzes the condensation of pantoate with beta-alanine in an ATP-dependent reaction via a pantoyl-adenylate intermediate. This Brucella abortus (strain S19) protein is Pantothenate synthetase.